Reading from the N-terminus, the 387-residue chain is Phosphoglycerate kinase (387 aa).

Residues 21 to 23 (DLN), R36, 59 to 62 (HLGR), R113, and R146 each bind substrate. Residues K197, E314, and 340–343 (GGDT) contribute to the ATP site.

It belongs to the phosphoglycerate kinase family. Monomer.

The protein localises to the cytoplasm. The catalysed reaction is (2R)-3-phosphoglycerate + ATP = (2R)-3-phospho-glyceroyl phosphate + ADP. Its pathway is carbohydrate degradation; glycolysis; pyruvate from D-glyceraldehyde 3-phosphate: step 2/5. The polypeptide is Phosphoglycerate kinase (Pseudomonas putida (strain W619)).